Reading from the N-terminus, the 429-residue chain is Adenylosuccinate synthetase (429 aa).

GTP-binding positions include 12–18 (GDEGKGK) and 40–42 (GHT). Asp13 (proton acceptor) is an active-site residue. The Mg(2+) site is built by Asp13 and Gly40. Residues 13-16 (DEGK), 38-41 (NAGH), Thr128, Arg142, Gln223, Thr238, and Arg302 contribute to the IMP site. The Proton donor role is filled by His41. 298–304 (TVTGRPR) serves as a coordination point for substrate. Residues Arg304, 330–332 (LLD), and 412–414 (SVG) each bind GTP.

The protein belongs to the adenylosuccinate synthetase family. As to quaternary structure, homodimer. Mg(2+) serves as cofactor.

It localises to the cytoplasm. The catalysed reaction is IMP + L-aspartate + GTP = N(6)-(1,2-dicarboxyethyl)-AMP + GDP + phosphate + 2 H(+). It functions in the pathway purine metabolism; AMP biosynthesis via de novo pathway; AMP from IMP: step 1/2. Functionally, plays an important role in the de novo pathway of purine nucleotide biosynthesis. Catalyzes the first committed step in the biosynthesis of AMP from IMP. This Lactobacillus gasseri (strain ATCC 33323 / DSM 20243 / BCRC 14619 / CIP 102991 / JCM 1131 / KCTC 3163 / NCIMB 11718 / NCTC 13722 / AM63) protein is Adenylosuccinate synthetase.